The sequence spans 181 residues: Crossover junction endodeoxyribonuclease RuvC (181 aa).

Active-site residues include Asp7, Glu67, and Asp139. Positions 7, 67, and 139 each coordinate Mg(2+).

This sequence belongs to the RuvC family. In terms of assembly, homodimer which binds Holliday junction (HJ) DNA. The HJ becomes 2-fold symmetrical on binding to RuvC with unstacked arms; it has a different conformation from HJ DNA in complex with RuvA. In the full resolvosome a probable DNA-RuvA(4)-RuvB(12)-RuvC(2) complex forms which resolves the HJ. The cofactor is Mg(2+).

It localises to the cytoplasm. The enzyme catalyses Endonucleolytic cleavage at a junction such as a reciprocal single-stranded crossover between two homologous DNA duplexes (Holliday junction).. The RuvA-RuvB-RuvC complex processes Holliday junction (HJ) DNA during genetic recombination and DNA repair. Endonuclease that resolves HJ intermediates. Cleaves cruciform DNA by making single-stranded nicks across the HJ at symmetrical positions within the homologous arms, yielding a 5'-phosphate and a 3'-hydroxyl group; requires a central core of homology in the junction. The consensus cleavage sequence is 5'-(A/T)TT(C/G)-3'. Cleavage occurs on the 3'-side of the TT dinucleotide at the point of strand exchange. HJ branch migration catalyzed by RuvA-RuvB allows RuvC to scan DNA until it finds its consensus sequence, where it cleaves and resolves the cruciform DNA. This Cupriavidus necator (strain ATCC 17699 / DSM 428 / KCTC 22496 / NCIMB 10442 / H16 / Stanier 337) (Ralstonia eutropha) protein is Crossover junction endodeoxyribonuclease RuvC.